Reading from the N-terminus, the 307-residue chain is Urease accessory protein UreD (307 aa).

It belongs to the UreD family. In terms of assembly, ureD, UreF and UreG form a complex that acts as a GTP-hydrolysis-dependent molecular chaperone, activating the urease apoprotein by helping to assemble the nickel containing metallocenter of UreC. The UreE protein probably delivers the nickel.

The protein localises to the cytoplasm. In terms of biological role, required for maturation of urease via the functional incorporation of the urease nickel metallocenter. This Prochlorococcus marinus (strain NATL2A) protein is Urease accessory protein UreD.